A 755-amino-acid polypeptide reads, in one-letter code: Xaa-Pro dipeptidyl-peptidase (755 aa).

Residues serine 348, aspartate 468, and histidine 498 each act as charge relay system in the active site.

It belongs to the peptidase S15 family. In terms of assembly, homodimer.

It is found in the cytoplasm. It carries out the reaction Hydrolyzes Xaa-Pro-|- bonds to release unblocked, N-terminal dipeptides from substrates including Ala-Pro-|-p-nitroanilide and (sequentially) Tyr-Pro-|-Phe-Pro-|-Gly-Pro-|-Ile.. Its function is as follows. Removes N-terminal dipeptides sequentially from polypeptides having unsubstituted N-termini provided that the penultimate residue is proline. The sequence is that of Xaa-Pro dipeptidyl-peptidase from Streptococcus thermophilus (strain CNRZ 1066).